A 34-amino-acid chain; its full sequence is MSDIN-like toxin proprotein 3 (34 aa).

Residues 1 to 10 (MSDINTARLP) constitute a propeptide that is removed on maturation. Positions 11–20 (FFQPPEFRPP) form a cross-link, cyclopeptide (Phe-Pro). Residues 21–34 (CVGDDIEMVLTRGE) constitute a propeptide that is removed on maturation.

It belongs to the MSDIN fungal toxin family. Post-translationally, processed by the macrocyclase-peptidase enzyme POPB to yield a toxic cyclic decapeptide. POPB first removes 10 residues from the N-terminus. Conformational trapping of the remaining peptide forces the enzyme to release this intermediate rather than proceed to macrocyclization. The enzyme rebinds the remaining peptide in a different conformation and catalyzes macrocyclization of the N-terminal 10 residues.

Probable toxin that belongs to the MSDIN-like toxin family responsible for a large number of food poisoning cases and deaths. This is MSDIN-like toxin proprotein 3 from Amanita bisporigera (Destroying angel).